The sequence spans 604 residues: Putative ankyrin repeat protein L56 (604 aa).

ANK repeat units follow at residues 77 to 106 (IDRY…DILV), 135 to 164 (FFKS…NADG), 166 to 189 (LSAC…YDDN), 190 to 219 (TIYH…EDKR), 221 to 247 (NVFI…KWKI), 248 to 277 (DVEF…DSKY), 314 to 341 (KFSK…NENV), 342 to 371 (DLRE…EFTD), 380 to 410 (EHIT…SRSY), 445 to 474 (YSQA…DIKP), 475 to 504 (ITNI…DITI), 505 to 534 (NDNR…DIRT), and 535 to 565 (DDDY…EPSN).

The chain is Putative ankyrin repeat protein L56 from Acanthamoeba polyphaga (Amoeba).